A 33-amino-acid polypeptide reads, in one-letter code: GLFDVVKGVLKGAGKNVAGSLLEQLKCKLSGGC.

Cys-27 and Cys-33 form a disulfide bridge.

In terms of tissue distribution, expressed by the skin glands.

The protein localises to the secreted. Its function is as follows. Antimicrobial peptide. Active against the Gram-positive bacterium S.aureus (MIC=30 uM) and the Gram-negative bacterium E.coli (MIC=30 uM). In Rana dybowskii (Dybovsky's frog), this protein is Brevinin-2DYb.